We begin with the raw amino-acid sequence, 280 residues long: Coiled-coil domain-containing protein 106 (280 aa).

The stretch at 63–101 (TQLHMALERNSWLQKRIEDLEEERDFLRCQLDKFISSAR) forms a coiled coil. Basic and acidic residues predominate over residues 103-121 (EAEDHCRMKPGPRRMEGDS). Residues 103 to 176 (EAEDHCRMKP…KPKARERQRV (74 aa)) are disordered. S130 carries the post-translational modification Phosphoserine. Residues 133 to 146 (ESAASSLSGASEEG) are compositionally biased toward low complexity. The short motif at 151–164 (RRRQKQKGGASRRR) is the Bipartite nuclear localization signal element. Basic residues predominate over residues 152-168 (RRQKQKGGASRRRFGKP).

In terms of assembly, interacts with p53/TP53.

It is found in the nucleus. Functionally, promotes the degradation of p53/TP53 protein and inhibits its transactivity. In Homo sapiens (Human), this protein is Coiled-coil domain-containing protein 106 (CCDC106).